Here is a 372-residue protein sequence, read N- to C-terminus: Putative KilA-N domain-containing protein L32 (372 aa).

Basic residues predominate over residues 1 to 12 (MPHKAPKSKLFR). The tract at residues 1 to 129 (MPHKAPKSKL…SDNDKSKDNF (129 aa)) is disordered. Residues 14–36 (RYVEDSDDETRGRSRNRSVEKSR) show a composition bias toward basic and acidic residues. The segment covering 37–53 (SKSLTRSKSKSPKKSRS) has biased composition (basic residues). Positions 79 to 120 (EDSEDSEDSESDQDDDKSDNEQSDSELDDSESDDDETDDNES) are enriched in acidic residues. One can recognise a KilA-N domain in the interval 151–255 (KFAIGKFGDF…IKIGEWIEEW (105 aa)).

In Acanthamoeba polyphaga (Amoeba), this protein is Putative KilA-N domain-containing protein L32.